The following is a 156-amino-acid chain: Small ribosomal subunit protein uS7 (156 aa).

Belongs to the universal ribosomal protein uS7 family. Part of the 30S ribosomal subunit. Contacts proteins S9 and S11.

Functionally, one of the primary rRNA binding proteins, it binds directly to 16S rRNA where it nucleates assembly of the head domain of the 30S subunit. Is located at the subunit interface close to the decoding center, probably blocks exit of the E-site tRNA. The polypeptide is Small ribosomal subunit protein uS7 (Synechococcus sp. (strain CC9605)).